The following is a 280-amino-acid chain: F-actin-capping protein subunit alpha (280 aa).

The protein belongs to the F-actin-capping protein alpha subunit family. Heterodimer of an alpha and a beta subunit.

Its subcellular location is the cytoplasm. The protein resides in the cytoskeleton. F-actin-capping proteins bind in a Ca(2+)-independent manner to the fast growing ends of actin filaments (barbed end) thereby blocking the exchange of subunits at these ends. Unlike other capping proteins (such as gelsolin and severin), these proteins do not sever actin filaments. This chain is F-actin-capping protein subunit alpha (CAP01), found in Candida albicans (strain SC5314 / ATCC MYA-2876) (Yeast).